A 916-amino-acid chain; its full sequence is Bifunctional aspartokinase/homoserine dehydrogenase 2, chloroplastic (916 aa).

Residues 1–87 (MATLKPSFTV…VDQVQIPKGE (87 aa)) constitute a chloroplast transit peptide. Residues 88 to 336 (MWSVHKFGGT…VNEAVILQTL (249 aa)) form an aspartokinase region. Positions 337–562 (SYQEAWEMSY…LSRTTLAMGI (226 aa)) are interface. 2 consecutive ACT domains span residues 412-487 (VEGT…VIPN) and 493-570 (AVGQ…LIGA). The homoserine dehydrogenase stretch occupies residues 563–916 (VGPGLIGATL…RLASYLGAPS (354 aa)). NAD(+) is bound at residue Ile568. NADP(+)-binding residues include Ile568, Lys600, Thr649, and Lys673. Residue Ile568 coordinates NADPH. Thr649 is a binding site for NAD(+). Positions 649 and 673 each coordinate NADPH. Glu700, Val703, Ala705, and Leu707 together coordinate Na(+). NADP(+) contacts are provided by Gly758 and Glu761. Residues Glu761 and Asp772 each coordinate L-homoserine. Lys776 (proton donor) is an active-site residue. Gly893 contributes to the NAD(+) binding site. Gly893 contributes to the NADP(+) binding site. NADPH is bound at residue Gly893.

It in the N-terminal section; belongs to the aspartokinase family. This sequence in the C-terminal section; belongs to the homoserine dehydrogenase family. Homo- or heterodimer. Requires a metal cation as cofactor.

Its subcellular location is the plastid. The protein resides in the chloroplast. The catalysed reaction is L-homoserine + NADP(+) = L-aspartate 4-semialdehyde + NADPH + H(+). It carries out the reaction L-homoserine + NAD(+) = L-aspartate 4-semialdehyde + NADH + H(+). The enzyme catalyses L-aspartate + ATP = 4-phospho-L-aspartate + ADP. It participates in amino-acid biosynthesis; L-lysine biosynthesis via DAP pathway; (S)-tetrahydrodipicolinate from L-aspartate: step 1/4. The protein operates within amino-acid biosynthesis; L-methionine biosynthesis via de novo pathway; L-homoserine from L-aspartate: step 1/3. Its pathway is amino-acid biosynthesis; L-methionine biosynthesis via de novo pathway; L-homoserine from L-aspartate: step 3/3. It functions in the pathway amino-acid biosynthesis; L-threonine biosynthesis; L-threonine from L-aspartate: step 1/5. It participates in amino-acid biosynthesis; L-threonine biosynthesis; L-threonine from L-aspartate: step 3/5. Its activity is regulated as follows. Threonine interaction with Gln-443 leads to inhibition of aspartate kinase activity and facilitates the binding of a second threonine on Gln-524, leading to a partial inhibition of homoserine dehydrogenase activity (25% of activity remaining at saturation with threonine). Homoserine dehydrogenase activity is also partially inhibited by cysteine (15% of activity remaining at saturation with cysteine). No synergy between threonine and cysteine for the inhibition. 13-fold activation of aspartate kinase activity by cysteine, isoleucine, valine, serine and alanine at 2.5 mM and 4-fold activation by leucine at 2.5 mM, but no activation of homoserine dehydrogenase activity. Bifunctional aspartate kinase and homoserine dehydrogenase that catalyzes the first and the third steps toward the synthesis of lysine, methionine and threonine from aspartate. The sequence is that of Bifunctional aspartokinase/homoserine dehydrogenase 2, chloroplastic (AKHSDH2) from Arabidopsis thaliana (Mouse-ear cress).